Here is a 773-residue protein sequence, read N- to C-terminus: Jhy protein homolog (773 aa).

Disordered stretches follow at residues 1 to 247 (MSHS…SKQY), 325 to 373 (WSQY…KSLV), 496 to 526 (KKHP…QPKL), 596 to 615 (ESES…KISR), and 713 to 743 (AKTI…KEDT). The span at 10 to 28 (VSIQSPVHHTNIKVQSTEP) shows a compositional bias: polar residues. Residues 29–43 (SFKKEDLHLISKDSL) show a composition bias toward basic and acidic residues. Residues 48–57 (ESPTQKIKSQ) show a composition bias toward polar residues. The segment covering 59-84 (DLEDQIQDNDMEPDSLEEENLSETEE) has biased composition (acidic residues). Residues 112–134 (PTEDKYSHIRYDPNWKSKKEEGK) are compositionally biased toward basic and acidic residues. Over residues 145–154 (VDSSTENLTL) the composition is skewed to polar residues. Over residues 216–229 (SNLSRYLKSSSSRS) the composition is skewed to low complexity. The segment covering 334–351 (SSGPRGQSSETTNGQQPS) has biased composition (polar residues). A compositionally biased stretch (basic residues) spans 353-369 (KPAKHKIRKQRRHRHGP). Residues 500 to 516 (SGSQKGSQSVSNINRQA) are compositionally biased toward polar residues. Low complexity predominate over residues 598 to 610 (ESQLSSERSQRNQ). Basic and acidic residues predominate over residues 728–743 (ASKEKKTPTHAGKEDT).

Required for the normal development of cilia in brain ependymal cells lining the ventricular surfaces. This Bos taurus (Bovine) protein is Jhy protein homolog (JHY).